Consider the following 479-residue polypeptide: Aspartyl/glutamyl-tRNA(Asn/Gln) amidotransferase subunit B (479 aa).

This sequence belongs to the GatB/GatE family. GatB subfamily. Heterotrimer of A, B and C subunits.

The catalysed reaction is L-glutamyl-tRNA(Gln) + L-glutamine + ATP + H2O = L-glutaminyl-tRNA(Gln) + L-glutamate + ADP + phosphate + H(+). The enzyme catalyses L-aspartyl-tRNA(Asn) + L-glutamine + ATP + H2O = L-asparaginyl-tRNA(Asn) + L-glutamate + ADP + phosphate + 2 H(+). Its function is as follows. Allows the formation of correctly charged Asn-tRNA(Asn) or Gln-tRNA(Gln) through the transamidation of misacylated Asp-tRNA(Asn) or Glu-tRNA(Gln) in organisms which lack either or both of asparaginyl-tRNA or glutaminyl-tRNA synthetases. The reaction takes place in the presence of glutamine and ATP through an activated phospho-Asp-tRNA(Asn) or phospho-Glu-tRNA(Gln). The protein is Aspartyl/glutamyl-tRNA(Asn/Gln) amidotransferase subunit B of Streptococcus mutans serotype c (strain ATCC 700610 / UA159).